Consider the following 686-residue polypeptide: Methionine--tRNA ligase (686 aa).

The 'HIGH' region signature appears at 15–25 (PYANGPIHLGH). Zn(2+) contacts are provided by Cys146, Cys149, Cys159, and Cys162. A 'KMSKS' region motif is present at residues 331–335 (KMSKS). Lys334 serves as a coordination point for ATP. A tRNA-binding domain is found at 584 to 686 (DFAKIDLRVA…AGVKAGSRVM (103 aa)).

The protein belongs to the class-I aminoacyl-tRNA synthetase family. MetG type 1 subfamily. In terms of assembly, homodimer. The cofactor is Zn(2+).

The protein resides in the cytoplasm. The enzyme catalyses tRNA(Met) + L-methionine + ATP = L-methionyl-tRNA(Met) + AMP + diphosphate. Functionally, is required not only for elongation of protein synthesis but also for the initiation of all mRNA translation through initiator tRNA(fMet) aminoacylation. In Mannheimia succiniciproducens (strain KCTC 0769BP / MBEL55E), this protein is Methionine--tRNA ligase.